The chain runs to 89 residues: UPF0213 protein LSEI_1587 (89 aa).

The 76-residue stretch at 4 to 79 (KTYYFYVLLC…KHQTRHRKEV (76 aa)) folds into the GIY-YIG domain.

This sequence belongs to the UPF0213 family.

This chain is UPF0213 protein LSEI_1587, found in Lacticaseibacillus paracasei (strain ATCC 334 / BCRC 17002 / CCUG 31169 / CIP 107868 / KCTC 3260 / NRRL B-441) (Lactobacillus paracasei).